Here is a 172-residue protein sequence, read N- to C-terminus: Transcriptional repressor NrdR (172 aa).

A zinc finger lies at 3 to 34 (CPFCRHPDSRVVDSRTTDDGTSIRRRRQCPDC). In terms of domain architecture, ATP-cone spans 46 to 136 (LMVIKRSGVT…VYRAFDSLED (91 aa)). The segment at 152–172 (ERSGGGTCGTGTVPVPAGTAD) is disordered. Low complexity predominate over residues 161–172 (TGTVPVPAGTAD).

Belongs to the NrdR family. The cofactor is Zn(2+).

Functionally, negatively regulates transcription of bacterial ribonucleotide reductase nrd genes and operons by binding to NrdR-boxes. The protein is Transcriptional repressor NrdR of Streptomyces clavuligerus.